Reading from the N-terminus, the 206-residue chain is Large ribosomal subunit protein uL4 (206 aa).

The protein belongs to the universal ribosomal protein uL4 family. As to quaternary structure, part of the 50S ribosomal subunit.

Its function is as follows. One of the primary rRNA binding proteins, this protein initially binds near the 5'-end of the 23S rRNA. It is important during the early stages of 50S assembly. It makes multiple contacts with different domains of the 23S rRNA in the assembled 50S subunit and ribosome. Functionally, forms part of the polypeptide exit tunnel. This is Large ribosomal subunit protein uL4 from Rhodopseudomonas palustris (strain ATCC BAA-98 / CGA009).